A 1244-amino-acid chain; its full sequence is MSGTKWTEEQLSAITTRDCNLLVAAAAGSGKTAVLVERIIKIITNEENPIDIDKLLVVTFTSAAAAEMRERIANAISKKLDETPTSKNLQKQLTLLNRSNIMTIHSFCLGVIKNNFHKIDLDPSFRICDQTEGILLKMEIIDELFDDKYDEENQEFIKFIEAFSSYKSDNALKELVLSLYNFIMAGPWPKKWLKAASEDFDIKTLQELDESKWVSVLKESIKIELDGYIKMMQKAVELINETDGLEPYFEGFSSELDLIVNAYNNVESSLNDLYNSLNLITFNRLKTIKKNTVSDENIQNLVKQIRDQVKKKISALIEGTFIATPDKMLDNIIKSYPYINQLTELTSEFIDRFNAKKKEKNILDFNDLEHLCLKILIEDNEENQIVPSTIAQKFKDYFEEVLVDEYQDSNNVQEAIIELVSRKNSDNPNVFMVGDVKQSIYKFRQAKPELFIDKYNSYSLDKGINRKIQLYKNFRSREEVINGVNYIFKSVMSKTVGELEYTDVEALNLGASYPKKKNVDDIIGGPIEVHILDRSDNKEENDESKLQAEEEEIGDVNLEARIIVKRINDLISKKDGSKFKVLDKDTGEYRDLKYKDIVILLRATKNWSEVLLDELGLAGIPVYADTGSGYFESIEIRTIMSLLKVIDNPMQDVPMLSLLISPIIGLSAEELTDIRLIDKEKYFYENIIKISTEKLISEELQEKCEYILSSIDKWRRKSIYMPIDEFIWYLYMDTAYYGYVGAMPNGVLRQANLKILFQRARQFSETSFKGLFNFINFINKLTKSSGDMGSAKILGENEDVVRIMSIHKSKGLEFPVVFLAGCGKNFNLMDLNNKILYHEELGLGPEYINLENRTSITTLPKEAIKKRMKLETLSEEMRVLYVAFTRAKEKLIITGAVRNAEKSIEKWINSAVLDKDVILPYEISKGKSYLDWIGMALCKHKDGKILRKKLGFSSEMCKDDLSMWKISIWNKYELDMYDELDENQEELDVKISILDKDVNKKVKSEVYRRLGYEYEFKESTKLTSNISVSDLKRRNMNDNIDTLEIFDLEEEDNKNKDVITPKFLQEKKGISSAERGTAIHFAMKKIDFSKVGTLKEIKEQLNKLYEEEFILQEEYSSINPYKILSFFKSNLGKKMLDVYNKGGKIYREIPFHTEISSLELDESLPQKYANEKIRLQGIIDCFFKCDDEIILLDYKTDYVENEEEFKEKYKSQLLYYSEAVFKMTGKKVNKRYLYSFYLEKEILI.

In terms of domain architecture, UvrD-like helicase ATP-binding spans 4-477; sequence TKWTEEQLSA…IQLYKNFRSR (474 aa). Residue 25–32 participates in ATP binding; that stretch reads AAAGSGKT. The 295-residue stretch at 517–811 folds into the UvrD-like helicase C-terminal domain; that stretch reads KNVDDIIGGP…RIMSIHKSKG (295 aa).

Belongs to the helicase family. AddA subfamily. Heterodimer of AddA and AddB/RexB. The cofactor is Mg(2+).

It carries out the reaction Couples ATP hydrolysis with the unwinding of duplex DNA by translocating in the 3'-5' direction.. It catalyses the reaction ATP + H2O = ADP + phosphate + H(+). Its function is as follows. The heterodimer acts as both an ATP-dependent DNA helicase and an ATP-dependent, dual-direction single-stranded exonuclease. Recognizes the chi site generating a DNA molecule suitable for the initiation of homologous recombination. The AddA nuclease domain is required for chi fragment generation; this subunit has the helicase and 3' -&gt; 5' nuclease activities. The chain is ATP-dependent helicase/nuclease subunit A from Clostridium botulinum (strain Alaska E43 / Type E3).